A 126-amino-acid chain; its full sequence is Holo-[acyl-carrier-protein] synthase (126 aa).

Residues Asp9 and Glu58 each coordinate Mg(2+).

The protein belongs to the P-Pant transferase superfamily. AcpS family. Mg(2+) is required as a cofactor.

It is found in the cytoplasm. It catalyses the reaction apo-[ACP] + CoA = holo-[ACP] + adenosine 3',5'-bisphosphate + H(+). Transfers the 4'-phosphopantetheine moiety from coenzyme A to a Ser of acyl-carrier-protein. The polypeptide is Holo-[acyl-carrier-protein] synthase (Escherichia coli O139:H28 (strain E24377A / ETEC)).